We begin with the raw amino-acid sequence, 70 residues long: Turripeptide Pal9.2 (70 aa).

An N-terminal signal peptide occupies residues 1-20; that stretch reads MKVYCLLVVLLVGLVSQTQG. A Kazal-like domain is found at 21–70; the sequence is QLDKKCNMACTLDYRPVCGSDGKTYPNRCALTSTACESQQSITVLHDGEC. Intrachain disulfides connect C26/C56, C30/C49, and C38/C70.

It belongs to the conopeptide P-like superfamily. As to expression, expressed by the venom duct.

The protein localises to the secreted. In terms of biological role, acts as a neurotoxin by inhibiting an ion channel. May also act as a serine protease inhibitor, since it possess the kazal serine protease inhibitor signature. The protein is Turripeptide Pal9.2 of Polystira albida (White giant-turris).